Here is a 1018-residue protein sequence, read N- to C-terminus: Contactin-1 (1018 aa).

The first 20 residues, 1–20 (MKMWLLFSLLVIISFKTCLS), serve as a signal peptide directing secretion. Ig-like C2-type domains lie at 41-131 (PIFE…ATLS), 137-223 (PFPP…KSVF), 241-326 (PADI…ARIY), 331-407 (PEWV…AELK), 413-500 (PTFE…GTLV), and 504-601 (PTRI…LVVR). Intrachain disulfides connect Cys65–Cys114 and Cys158–Cys211. 2 N-linked (GlcNAc...) asparagine glycosylation sites follow: Asn208 and Asn258. A disulfide bridge links Cys263 with Cys310. A glycan (N-linked (GlcNAc...) asparagine) is linked at Asn338. Cystine bridges form between Cys352–Cys391 and Cys436–Cys484. Residues Asn457, Asn473, Asn494, and Asn521 are each glycosylated (N-linked (GlcNAc...) asparagine). Cys526 and Cys583 form a disulfide bridge. Asn591 carries N-linked (GlcNAc...) asparagine glycosylation. Fibronectin type-III domains are found at residues 606-704 (PPGG…TDGA), 709-806 (APSD…SAQD), 811-906 (APTA…APPS), and 907-1000 (QPPR…ILSP). Disordered stretches follow at residues 698–718 (KIKTDGAAPNVAPSDVGGGGG) and 891–910 (PPSDMTETFTKKAPPSQPPR). The GPI-anchor amidated serine moiety is linked to residue Ser999. A propeptide spans 1000–1018 (PCLLGFLLPALGILVYLEF) (removed in mature form).

This sequence belongs to the immunoglobulin superfamily. Contactin family. As to quaternary structure, monomer. Interacts with CNTNAP1 in cis form. Binds to the carbonic-anhydrase like domain of PTPRZ1. Interacts with NOTCH1 and TNR. Detected in a complex with NRCAM and PTPRB. Interacts with TASOR.

The protein localises to the cell membrane. Contactins mediate cell surface interactions during nervous system development. Involved in the formation of paranodal axo-glial junctions in myelinated peripheral nerves and in the signaling between axons and myelinating glial cells via its association with CNTNAP1. Participates in oligodendrocytes generation by acting as a ligand of NOTCH1. Its association with NOTCH1 promotes NOTCH1 activation through the released notch intracellular domain (NICD) and subsequent translocation to the nucleus. Interaction with TNR induces a repulsion of neurons and an inhibition of neurite outgrowth. The sequence is that of Contactin-1 (CNTN1) from Bos taurus (Bovine).